Here is a 349-residue protein sequence, read N- to C-terminus: NADH-ubiquinone oxidoreductase chain 2 (349 aa).

The next 9 helical transmembrane spans lie at 3-23 (PYVL…TFAS), 66-86 (AAAM…EWEI), 98-118 (VMLA…LPEV), 139-159 (FALM…TIGL), 178-198 (ILAY…QFAP), 199-219 (SLTL…FLTL), 240-260 (LAAL…LSGF), 274-294 (GLPL…YFYL), and 319-339 (FTMI…LLPL).

Belongs to the complex I subunit 2 family.

It localises to the mitochondrion inner membrane. It catalyses the reaction a ubiquinone + NADH + 5 H(+)(in) = a ubiquinol + NAD(+) + 4 H(+)(out). In terms of biological role, core subunit of the mitochondrial membrane respiratory chain NADH dehydrogenase (Complex I) that is believed to belong to the minimal assembly required for catalysis. Complex I functions in the transfer of electrons from NADH to the respiratory chain. The immediate electron acceptor for the enzyme is believed to be ubiquinone. This Oncorhynchus mykiss (Rainbow trout) protein is NADH-ubiquinone oxidoreductase chain 2 (MT-ND2).